A 254-amino-acid polypeptide reads, in one-letter code: Glucosamine-6-phosphate deaminase (254 aa).

Residue Asp-67 is the Proton acceptor; for enolization step of the active site. The active-site For ring-opening step is Asn-136. Residue His-138 is the Proton acceptor; for ring-opening step of the active site. The active-site For ring-opening step is the Glu-143.

Belongs to the glucosamine/galactosamine-6-phosphate isomerase family. NagB subfamily.

The catalysed reaction is alpha-D-glucosamine 6-phosphate + H2O = beta-D-fructose 6-phosphate + NH4(+). Its pathway is amino-sugar metabolism; N-acetylneuraminate degradation; D-fructose 6-phosphate from N-acetylneuraminate: step 5/5. In terms of biological role, catalyzes the reversible isomerization-deamination of glucosamine 6-phosphate (GlcN6P) to form fructose 6-phosphate (Fru6P) and ammonium ion. This is Glucosamine-6-phosphate deaminase from Brevibacillus brevis (strain 47 / JCM 6285 / NBRC 100599).